A 474-amino-acid polypeptide reads, in one-letter code: Cytochrome c-552 (474 aa).

The signal sequence occupies residues 1–29; the sequence is MSIKHWMASSVSVTALVMTALLNITAVSA. Residue His91 participates in heme c binding. 3 residues coordinate heme: Cys119, Cys122, and Lys123. Positions 157, 160, 161, 206, 209, and 210 each coordinate heme c. 4 residues coordinate Ca(2+): Glu212, Tyr213, Lys258, and Gln260. Tyr213 provides a ligand contact to substrate. A substrate-binding site is contributed by His261. 9 residues coordinate heme c: His272, Cys279, Cys282, His283, His298, Cys311, Cys314, His315, and His390.

Belongs to the cytochrome c-552 family. Requires Ca(2+) as cofactor. Heme c serves as cofactor.

Its subcellular location is the periplasm. It catalyses the reaction 6 Fe(III)-[cytochrome c] + NH4(+) + 2 H2O = 6 Fe(II)-[cytochrome c] + nitrite + 8 H(+). It functions in the pathway nitrogen metabolism; nitrate reduction (assimilation). In terms of biological role, catalyzes the reduction of nitrite to ammonia, consuming six electrons in the process. The chain is Cytochrome c-552 from Vibrio vulnificus (strain CMCP6).